Reading from the N-terminus, the 505-residue chain is Probable cytochrome P450 28c1 (505 aa).

Residue C444 participates in heme binding.

Belongs to the cytochrome P450 family. It depends on heme as a cofactor.

The protein resides in the endoplasmic reticulum membrane. Its subcellular location is the microsome membrane. In terms of biological role, may be involved in the metabolism of insect hormones and in the breakdown of synthetic insecticides. The chain is Probable cytochrome P450 28c1 (Cyp28c1) from Drosophila melanogaster (Fruit fly).